The chain runs to 158 residues: 2-C-methyl-D-erythritol 2,4-cyclodiphosphate synthase (158 aa).

Asp-9 and His-11 together coordinate a divalent metal cation. Residues 9–11 and 35–36 each bind 4-CDP-2-C-methyl-D-erythritol 2-phosphate; these read DVH and HS. Position 43 (His-43) interacts with a divalent metal cation. 4-CDP-2-C-methyl-D-erythritol 2-phosphate-binding positions include 57–59, 62–66, 101–107, 133–136, Phe-140, and Arg-143; these read DIG, FPDTD, AQKPKMA, and TTTE.

It belongs to the IspF family. In terms of assembly, homotrimer. It depends on a divalent metal cation as a cofactor.

The enzyme catalyses 4-CDP-2-C-methyl-D-erythritol 2-phosphate = 2-C-methyl-D-erythritol 2,4-cyclic diphosphate + CMP. It functions in the pathway isoprenoid biosynthesis; isopentenyl diphosphate biosynthesis via DXP pathway; isopentenyl diphosphate from 1-deoxy-D-xylulose 5-phosphate: step 4/6. In terms of biological role, involved in the biosynthesis of isopentenyl diphosphate (IPP) and dimethylallyl diphosphate (DMAPP), two major building blocks of isoprenoid compounds. Catalyzes the conversion of 4-diphosphocytidyl-2-C-methyl-D-erythritol 2-phosphate (CDP-ME2P) to 2-C-methyl-D-erythritol 2,4-cyclodiphosphate (ME-CPP) with a corresponding release of cytidine 5-monophosphate (CMP). This is 2-C-methyl-D-erythritol 2,4-cyclodiphosphate synthase from Bacillus thuringiensis subsp. konkukian (strain 97-27).